A 550-amino-acid polypeptide reads, in one-letter code: Atherin (550 aa).

A compositionally biased stretch (pro residues) spans Met1–Glu11. Disordered regions lie at residues Met1 to Tyr32 and Ser93 to Pro468. Residues Thr12 to Pro30 show a composition bias toward low complexity. An SAMD1-like winged helix (WH) domain is found at Ser24 to Val100. Thr108 is modified (phosphothreonine). Positions Ala125 to Pro138 are enriched in pro residues. Residues Val139–Ala160 show a composition bias toward low complexity. Ser163 bears the Phosphoserine mark. Residues Gly170–Leu179 show a composition bias toward low complexity. Composition is skewed to pro residues over residues Ala180 to Ala205 and Pro214 to Glu245. A compositionally biased stretch (low complexity) spans Gly246 to Pro257. Ser270 is subject to Phosphoserine. A compositionally biased stretch (basic and acidic residues) spans Ala290–Arg300. The span at Lys337–Val355 shows a compositional bias: acidic residues. Residues Ser437–Pro448 are compositionally biased toward pro residues. The 69-residue stretch at Trp474–Asp542 folds into the SAM domain.

As to quaternary structure, homopolymerize into a closed pentameric ring. Interacts (via SAM domain) with L3MBTL3 (via SAM domain); the interaction mediates L3MBTL3 binding to chromatin. Interacts (via WH domain) with KDM1A; the interaction modulates KDM1A function.

The protein localises to the nucleus. It localises to the chromosome. Its subcellular location is the secreted. In terms of biological role, unmethylated CpG islands (CGIs)-binding protein which localizes to H3K4me3-decorated CGIs, where it acts as a transcriptional repressor. Tethers L3MBTL3 to chromatin and interacts with the KDM1A histone demethylase complex to modulate H3K4me2 and H3K4me3 levels at CGIs. Plays a role in atherogenesis by binding with LDL on cell surface and promoting LDL oxidation which leads to the formation of foam cell. The sequence is that of Atherin (SAMD1) from Oryctolagus cuniculus (Rabbit).